We begin with the raw amino-acid sequence, 327 residues long: Complex I intermediate-associated protein 30, mitochondrial (327 aa).

Residues 1-24 constitute a mitochondrion transit peptide; the sequence is MALVHKLLRGTYFLRKFSKPTSAL. Residues 42–63 form a disordered region; it reads PVASPGKASSQRKTEGDLQGDH. The segment covering 53 to 63 has biased composition (basic and acidic residues); the sequence is RKTEGDLQGDH. Position 318 is a phosphoserine (Ser318).

This sequence belongs to the CIA30 family. In terms of assembly, part of the mitochondrial complex I assembly/MCIA complex that comprises at least the core subunits TMEM126B, NDUFAF1, ECSIT and ACAD9 and complement subunits such as COA1 and TMEM186. Interacts with ECSIT. Interacts with ACAD9. At early stages of complex I assembly, it is found in intermediate subcomplexes that contain different subunits including NDUFB6, NDUFA6, NDUFA9, NDUFS3, NDUFS7, ND1, ND2 and ND3. Interacts with TMEM70 and TMEM242. As to expression, ubiquitous.

Its subcellular location is the mitochondrion. The protein resides in the mitochondrion matrix. Functionally, as part of the MCIA complex, involved in the assembly of the mitochondrial complex I. The polypeptide is Complex I intermediate-associated protein 30, mitochondrial (Homo sapiens (Human)).